Reading from the N-terminus, the 378-residue chain is Regulatory protein E2 (378 aa).

The tract at residues 1–200 is transactivation domain; it reads METLCQRLDA…ESIYCPDSVS (200 aa). Composition is skewed to low complexity over residues 221 to 230 and 268 to 278; these read TYQTPTTSTP and NRVNTNNTNNR. The interval 221 to 281 is disordered; the sequence is TYQTPTTSTP…TNNTNNRQCL (61 aa). The segment at 297-378 is DNA-binding domain; it reads TTPVVHLKGE…VMGHMTGVDM (82 aa). K304 participates in a covalent cross-link: Glycyl lysine isopeptide (Lys-Gly) (interchain with G-Cter in SUMO).

This sequence belongs to the papillomaviridae E2 protein family. Binds DNA as homodimer. Interacts with protein E1; this interaction greatly increases E1 DNA-binding activity. Interacts with protein L1; this interaction enhances E2-dependent replication and transcription activation. Interacts with protein L2; this interaction inhibits E2 transcriptional activity but not DNA replication function E2. Interacts with protein E7; this interaction inhibits E7 oncogenic activity. Interacts with host TAF1; this interaction modulates E2-dependent transcriptional regulation. Interacts with host BRD4; this interaction mediates E2 transcriptional activation function. Additionally, the interaction with host BRD4 on mitotic chromosomes mediates tethering of the viral genome. Interacts with host TOPBP1; this interaction is required for optimal viral DNA replication. In terms of processing, phosphorylated. Post-translationally, sumoylation plays a regulatory role in E2 transcriptional activity.

The protein resides in the host nucleus. Functionally, plays a role in the initiation of viral DNA replication. A dimer of E2 interacts with a dimer of E1 in order to improve specificity of E1 DNA binding activity. Once the complex recognizes and binds DNA at specific sites, the E2 dimer is removed from DNA. E2 also regulates viral transcription through binding to the E2RE response element (5'-ACCNNNNNNGGT-3') present in multiple copies in the regulatory regions of the viral genome. Activates or represses transcription depending on E2RE's position with regards to proximal promoter elements including the TATA-box. Repression occurs by sterically hindering the assembly of the transcription initiation complex. This is Regulatory protein E2 from Homo sapiens (Human).